The chain runs to 357 residues: Membrane-bound lytic murein transglycosylase C (357 aa).

A signal peptide spans 1–15 (MKKYLLLALLPFLYA). A lipid anchor (N-palmitoyl cysteine) is attached at cysteine 16. Residue cysteine 16 is the site of S-diacylglycerol cysteine attachment.

Belongs to the transglycosylase Slt family.

It is found in the cell outer membrane. The enzyme catalyses Exolytic cleavage of the (1-&gt;4)-beta-glycosidic linkage between N-acetylmuramic acid (MurNAc) and N-acetylglucosamine (GlcNAc) residues in peptidoglycan, from either the reducing or the non-reducing ends of the peptidoglycan chains, with concomitant formation of a 1,6-anhydrobond in the MurNAc residue.. In terms of biological role, murein-degrading enzyme. May play a role in recycling of muropeptides during cell elongation and/or cell division. The sequence is that of Membrane-bound lytic murein transglycosylase C from Haemophilus influenzae (strain PittEE).